The primary structure comprises 196 residues: MINFFRKKRKIVLDTSVFINPDIRNFFGENPEKAIEEFIKIAKRAKNLEFYIPSTVFKELMYFVDEKKIPKDFYFLIRIKSPDKHRSVCPAIFFYELVEEMRQRINKGLRVAENAVRNVNQKDADEIIKDLRKKYREALREGIIDSKEDVDLIFLSMELQATLITGDQGLIKWADKLGIEWIVPEKFKDFLLSAIG.

Belongs to the HARP family.

The enzyme catalyses Endonucleolytic cleavage of RNA, removing 5'-extranucleotides from tRNA precursor.. Its function is as follows. RNA-free RNase P that catalyzes the removal of the 5'-leader sequence from pre-tRNA to produce the mature 5'-terminus. The chain is RNA-free ribonuclease P from Thermodesulfovibrio yellowstonii (strain ATCC 51303 / DSM 11347 / YP87).